The chain runs to 181 residues: Large ribosomal subunit protein uL5 (181 aa).

The protein belongs to the universal ribosomal protein uL5 family. Part of the 50S ribosomal subunit; contacts the 5S rRNA and probably tRNA. Forms a bridge to the 30S subunit in the 70S ribosome.

Its function is as follows. This is one of the proteins that bind and probably mediate the attachment of the 5S RNA into the large ribosomal subunit, where it forms part of the central protuberance. In the 70S ribosome it contacts protein S13 of the 30S subunit (bridge B1b), connecting the 2 subunits; this bridge is implicated in subunit movement. May contact the P site tRNA; the 5S rRNA and some of its associated proteins might help stabilize positioning of ribosome-bound tRNAs. The sequence is that of Large ribosomal subunit protein uL5 from Methanococcus maripaludis (strain C6 / ATCC BAA-1332).